The chain runs to 620 residues: LysM domain receptor-like kinase 3 (620 aa).

The N-terminal stretch at 1–23 (MNLKNGLLLFILFLDCVFFKVES) is a signal peptide. Residues 24–231 (KCVKGCDVAL…YSRTGIAKGS (208 aa)) are Extracellular-facing. Intrachain disulfides connect C25–C92, C29–C154, and C90–C152. N-linked (GlcNAc...) asparagine glycosylation is present at N46. In terms of domain architecture, LysM 1; degenerate spans 46–72 (NISNFMQSKIVLTNSFDVIMSYNRDVV). LysM domains are found at residues 102-148 (FEYT…KINV) and 167-210 (VTYP…VFIP). Chitin contacts are provided by residues 108–114 (EGDDYDL) and 136–142 (DPNHIPV). 2 N-linked (GlcNAc...) asparagine glycosylation sites follow: N147 and N199. The helical transmembrane segment at 232–252 (AVGIAMAGIFGLLLFVIYIYA) threads the bilayer. Residues 253-620 (KYFQKKEEEK…QSLINLLSTR (368 aa)) are Cytoplasmic-facing. Residues 265 to 278 (LPQTSRAFSTQDAS) show a composition bias toward polar residues. Positions 265-292 (LPQTSRAFSTQDASGSAEYETSGSSGHA) are disordered. A phosphoserine mark is found at S269 and S273. In terms of domain architecture, Protein kinase spans 322–595 (FSLDNKIGQG…RSIVVALMTL (274 aa)). ATP is bound by residues 328-336 (IGQGGFGAV) and K349. The active-site Proton acceptor is D441.

Belongs to the protein kinase superfamily. Ser/Thr protein kinase family. Forms homodimers and homooligomers. Forms heteromeric complexes with NFP at the cell periphery in nodules. Interacts with PUB1. Autophosphorylated. Expressed in the epidermal and root hair cells of the developing root hair zone during nonsymbiotic growth. Accumulates in roots and nodules during symbiotic growth with rhizobia. Localized at the cell periphery in a narrow zone of about two cell layers (e.g. L1/L2 zone) at the nodule apex upon infection by rhizobia, from the meristem to the infection zone (at protein level).

It is found in the cell membrane. The protein resides in the vacuole lumen. It catalyses the reaction L-seryl-[protein] + ATP = O-phospho-L-seryl-[protein] + ADP + H(+). The enzyme catalyses L-threonyl-[protein] + ATP = O-phospho-L-threonyl-[protein] + ADP + H(+). Putative receptor for S.meliloti Nod factor signals essential for the establishment of the nitrogen-fixing, root nodule symbiosis with S.meliloti. Involved in the control of root hair curling after S.meliloti infection, probably by modulating the reorganization of the microtubular cytoskeleton in epidermal and cortical cells. Regulates a subset of Nod factor-induced genes. This chain is LysM domain receptor-like kinase 3, found in Medicago truncatula (Barrel medic).